The chain runs to 124 residues: Cytochrome c2 (124 aa).

Glutamine 1 bears the Pyrrolidone carboxylic acid mark. Residues cysteine 16, cysteine 19, histidine 20, and methionine 85 each contribute to the heme c site.

This sequence belongs to the cytochrome c family. In terms of processing, binds 1 heme c group covalently per subunit.

The protein resides in the periplasm. Its function is as follows. Cytochrome c2 is found mainly in purple, non-sulfur, photosynthetic bacteria where it functions as the electron donor to the oxidized bacteriochlorophyll in the photophosphorylation pathway. However, it may also have a role in the respiratory chain and is found in some non-photosynthetic bacteria. The sequence is that of Cytochrome c2 from Afifella marina (Rhodobium marinum).